A 146-amino-acid chain; its full sequence is Ribonuclease P protein component (146 aa).

Belongs to the RnpA family. As to quaternary structure, consists of a catalytic RNA component (M1 or rnpB) and a protein subunit.

It carries out the reaction Endonucleolytic cleavage of RNA, removing 5'-extranucleotides from tRNA precursor.. Its function is as follows. RNaseP catalyzes the removal of the 5'-leader sequence from pre-tRNA to produce the mature 5'-terminus. It can also cleave other RNA substrates such as 4.5S RNA. The protein component plays an auxiliary but essential role in vivo by binding to the 5'-leader sequence and broadening the substrate specificity of the ribozyme. The protein is Ribonuclease P protein component of Chlorobium phaeobacteroides (strain DSM 266 / SMG 266 / 2430).